A 189-amino-acid chain; its full sequence is Endoribonuclease YbeY (189 aa).

H146, H150, and H156 together coordinate Zn(2+).

It belongs to the endoribonuclease YbeY family. Zn(2+) is required as a cofactor.

The protein resides in the cytoplasm. Its function is as follows. Single strand-specific metallo-endoribonuclease involved in late-stage 70S ribosome quality control and in maturation of the 3' terminus of the 16S rRNA. The chain is Endoribonuclease YbeY from Prochlorococcus marinus (strain MIT 9211).